We begin with the raw amino-acid sequence, 156 residues long: MGRSRSRSPERRRERRRSRSASRERERRRRERSRSRERRRSRSRSPHRRRSRSPRRHRSSSISPGRLKDRRDDDKKDSKESKGAKERQIAAEDLEGKTEEEIEMMKMMGFATFDTSKGKKVDGSVNAYAINVSQKRKYRQYMNRKGGFNRPLDFIA.

The tract at residues 1 to 98 (MGRSRSRSPE…IAAEDLEGKT (98 aa)) is disordered. Residues 13 to 59 (RERRRSRSASRERERRRRERSRSRERRRSRSRSPHRRRSRSPRRHRS) are compositionally biased toward basic residues. Positions 66–98 (RLKDRRDDDKKDSKESKGAKERQIAAEDLEGKT) are enriched in basic and acidic residues.

The protein belongs to the SNUT3 family. As to quaternary structure, part of a tri-snRNP complex.

It is found in the nucleus. In terms of biological role, may play a role in mRNA splicing. This chain is U4/U6.U5 small nuclear ribonucleoprotein 27 kDa protein (snrnp27), found in Xenopus tropicalis (Western clawed frog).